We begin with the raw amino-acid sequence, 168 residues long: Phospholipase A and acyltransferase 1 (168 aa).

Residues methionine 1–arginine 138 are Cytoplasmic-facing. Residues leucine 20–glutamine 135 enclose the LRAT domain. Histidine 30 is an active-site residue. Residue cysteine 119 is the Acyl-thioester intermediate of the active site. A helical transmembrane segment spans residues alanine 139 to phenylalanine 159. Topologically, residues proline 160–tyrosine 168 are lumenal.

Belongs to the H-rev107 family. Abundantly expressed in testis, skeletal muscle, brain, and heart. As to expression, highly expressed in the testis, skeletal muscle, brain, heart, and thyroid.

The protein localises to the membrane. The protein resides in the cytoplasm. Its subcellular location is the nucleus. It catalyses the reaction a 1,2-diacyl-sn-glycero-3-phosphocholine + H2O = a 1-acyl-sn-glycero-3-phosphocholine + a fatty acid + H(+). The enzyme catalyses a 1,2-diacyl-sn-glycero-3-phosphocholine + H2O = a 2-acyl-sn-glycero-3-phosphocholine + a fatty acid + H(+). The catalysed reaction is 1,2-dihexadecanoyl-sn-glycero-3-phosphocholine + H2O = 2-hexadecanoyl-sn-glycero-3-phosphocholine + hexadecanoate + H(+). It carries out the reaction 1,2-dihexadecanoyl-sn-glycero-3-phosphocholine + H2O = 1-hexadecanoyl-sn-glycero-3-phosphocholine + hexadecanoate + H(+). It catalyses the reaction 1-hexadecanoyl-2-(5Z,8Z,11Z,14Z-eicosatetraenoyl)-sn-glycero-3-phosphoethanolamine + H2O = 2-(5Z,8Z,11Z,14Z)-eicosatetraenoyl-sn-glycero-3-phosphoethanolamine + hexadecanoate + H(+). The enzyme catalyses 1-hexadecanoyl-2-(5Z,8Z,11Z,14Z-eicosatetraenoyl)-sn-glycero-3-phosphoethanolamine + H2O = 1-hexadecanoyl-sn-glycero-3-phosphoethanolamine + (5Z,8Z,11Z,14Z)-eicosatetraenoate + H(+). The catalysed reaction is 1,2-di-(9Z-octadecenoyl)-sn-glycero-3-phosphoethanolamine + 1,2-dihexadecanoyl-sn-glycero-3-phosphocholine = hexadecanoyl-sn-glycero-3-phosphocholine + N-hexadecanoyl-1,2-di-(9Z-octadecenoyl)-sn-glycero-3-phosphoethanolamine + H(+). It carries out the reaction 1,2-dihexadecanoyl-sn-glycero-3-phosphocholine + a 2-acyl-sn-glycero-3-phosphocholine = a 1-hexadecanoyl-2-acyl-sn-glycero-3-phosphocholine + 2-hexadecanoyl-sn-glycero-3-phosphocholine. Functionally, exhibits both phospholipase A1/2 and acyltransferase activities. Shows phospholipase A1 (PLA1) and A2 (PLA2) activity, catalyzing the calcium-independent release of fatty acids from the sn-1 or sn-2 position of glycerophospholipids. Shows O-acyltransferase activity, catalyzing the transfer of a fatty acyl group from glycerophospholipid to the hydroxyl group of lysophospholipid. Shows N-acyltransferase activity, catalyzing the calcium-independent transfer of a fatty acyl group at the sn-1 position of phosphatidylcholine (PC) and other glycerophospholipids to the primary amine of phosphatidylethanolamine (PE), forming N-acylphosphatidylethanolamine (NAPE) which serves as precursor for N-acylethanolamines (NAEs). The sequence is that of Phospholipase A and acyltransferase 1 from Homo sapiens (Human).